Consider the following 563-residue polypeptide: MFSRNHRSRVTVARGSALEMEFKRGRFRLSLFSDLPEDTELQRKLDHEIRMREGACKLLAACSQREQALEATKSLLVCNSRILSYMGELQRRKEAQVLGKTSRRPSDSGPPAERSPCRGRVCISDLRIPLMWKDTEYFKNKGDLHRWAVFLLLQLGEHIQDTEMILVDRTLTDISFQSNVLFAEAGPDFELRLELYGACVEEEGALTGGPKRLATKLSSSLGRSSGRRVRASLDSAGGSGSSPILLPTPVVGGPRYHLLAHTTLTLAAVQDGFRTHDLTLASHEENPAWLPLYGSVCCRLAAQPLCMTQPTASGTLRVQQAGEMQNWAQVHGVLKGTNLFCYRQPEDADTGEEPLLTIAVNKETRVRAGELDQALGRPFTLSISNQYGDDEVTHTLQTESREALQSWMEALWQLFFDMSQWKQCCDEIMKIETPAPRKPPQALAKQGSLYHEMAIEPLDDIAAVTDILTQREGARLETPPPWLAMFTDQPALPNPCSPASVAPAPDWTHPLPWGRPRTFSLDAVPPDHSPRARSVAPLPPQRSPRTRGLCSKGQPRTWLQSPV.

Arginine 14 bears the Omega-N-methylarginine mark. The REM-1 domain occupies 17–98 (ALEMEFKRGR…LQRRKEAQVL (82 aa)). Residues serine 30 and serine 106 each carry the phosphoserine modification. Residues 96–116 (QVLGKTSRRPSDSGPPAERSP) form a disordered region. Arginine 230 is modified (asymmetric dimethylarginine). Serine 232 carries the post-translational modification Phosphoserine. The region spanning 309–416 (QPTASGTLRV…WMEALWQLFF (108 aa)) is the PH domain. The interval 518–563 (TFSLDAVPPDHSPRARSVAPLPPQRSPRTRGLCSKGQPRTWLQSPV) is disordered. A phosphoserine mark is found at serine 520, serine 529, and serine 543.

As to quaternary structure, interacts via its C-terminal region with the TAX1BP3 PDZ domain. This interaction facilitates Rho-mediated activation of the c-Fos serum response element (SRE). Interacts with SEPT9. Specifically binds to GTP-bound RHOA, RHOB and RHOC and inhibits their GTPase activity. Highly expressed in prostate, moderately in kidney, heart, brain, spleen, testis, placenta, small intestine, pancreas, skeletal muscle and peripheral blood leukocytes, and weakly in ovary, colon and thymus. Weakly expressed in all normal cell lines tested. Overexpressed in various cancer cell lines.

In terms of biological role, mediates Rho signaling to activate NF-kappa-B and may confer increased resistance to apoptosis to cells in gastric tumorigenesis. May play a novel role in the organization of septin structures. This is Rhotekin from Homo sapiens (Human).